Consider the following 161-residue polypeptide: Type II secretion system protein M (161 aa).

The Cytoplasmic segment spans residues 1-16; the sequence is MNELRRRWQVMSQRER. The chain crosses the membrane as a helical span at residues 17–37; that stretch reads LMALACGGLVVLCLLYYLIWA. Residues 38-161 lie on the Periplasmic side of the membrane; sequence PWQESVRQWQ…VTRLSLERVL (124 aa).

This sequence belongs to the GSP M family. Type II secretion system is composed of four main components: the outer membrane complex, the inner membrane complex, the cytoplasmic secretion ATPase and the periplasm-spanning pseudopilus. Forms homodimers. Interacts with OutL/GspL. Interacts with OutE/GspE and OutF/GspF.

The protein localises to the cell inner membrane. In terms of biological role, inner membrane component of the type II secretion system required for the energy-dependent secretion of extracellular factors such as proteases and toxins from the periplasm. Plays a role in the complex assembly and recruits OutL resulting in a stable complex in the inner membrane. Provides thus a link between the energy-providing OutE protein in the cytoplasm and the rest of the T2SS machinery. The sequence is that of Type II secretion system protein M (outM) from Dickeya chrysanthemi (Pectobacterium chrysanthemi).